Consider the following 185-residue polypeptide: Cuticle protein 18.6, isoform A (185 aa).

7 consecutive repeat copies span residues 21 to 24 (AAPA), 33 to 36 (AAPV), 41 to 44 (AAPV), 54 to 57 (AAPA), 133 to 136 (AAPV), 139 to 142 (AAPV), and 150 to 153 (AAPV). The Chitin-binding type R&amp;R domain maps to 64–134 (HPQYSFAYNV…KEAGAHPAAA (71 aa)).

Its function is as follows. Component of the cuticle of migratory locust which contains more than 100 different structural proteins. This chain is Cuticle protein 18.6, isoform A, found in Locusta migratoria (Migratory locust).